A 340-amino-acid polypeptide reads, in one-letter code: Glyceraldehyde-3-phosphate dehydrogenase (340 aa).

NAD(+)-binding positions include serine 11–isoleucine 12 and glycine 111. Position 140–142 (serine 140–asparagine 142) interacts with D-glyceraldehyde 3-phosphate. Cysteine 141 serves as the catalytic Nucleophile. Position 169 (arginine 169) interacts with NAD(+). Residue histidine 195–glycine 196 coordinates D-glyceraldehyde 3-phosphate. Glutamine 303 serves as a coordination point for NAD(+).

The protein belongs to the glyceraldehyde-3-phosphate dehydrogenase family. Homotetramer.

It is found in the cytoplasm. It catalyses the reaction D-glyceraldehyde 3-phosphate + phosphate + NADP(+) = (2R)-3-phospho-glyceroyl phosphate + NADPH + H(+). It carries out the reaction D-glyceraldehyde 3-phosphate + phosphate + NAD(+) = (2R)-3-phospho-glyceroyl phosphate + NADH + H(+). Its pathway is carbohydrate degradation; glycolysis; pyruvate from D-glyceraldehyde 3-phosphate: step 1/5. This is Glyceraldehyde-3-phosphate dehydrogenase from Methanococcus maripaludis (strain C6 / ATCC BAA-1332).